The sequence spans 216 residues: Large ribosomal subunit protein uL3 (216 aa).

The disordered stretch occupies residues 136-155; it reads GVSISHRSHGSTGQRQDPGK. Position 151 is an N5-methylglutamine (Gln151).

The protein belongs to the universal ribosomal protein uL3 family. As to quaternary structure, part of the 50S ribosomal subunit. Forms a cluster with proteins L14 and L19. Methylated by PrmB.

Its function is as follows. One of the primary rRNA binding proteins, it binds directly near the 3'-end of the 23S rRNA, where it nucleates assembly of the 50S subunit. This is Large ribosomal subunit protein uL3 from Rickettsia prowazekii (strain Madrid E).